The following is a 294-amino-acid chain: Shikimate dehydrogenase (NADP(+)) (294 aa).

Shikimate is bound by residues 25 to 27 and Thr-72; that span reads SAS. Catalysis depends on Lys-76, which acts as the Proton acceptor. Residues Asn-97 and Asp-112 each contribute to the shikimate site. Residues 136–140 and Thr-234 each bind NADP(+); that span reads GAGGA. Residue Tyr-236 participates in shikimate binding. Residue Gly-257 participates in NADP(+) binding.

This sequence belongs to the shikimate dehydrogenase family. In terms of assembly, homodimer.

The enzyme catalyses shikimate + NADP(+) = 3-dehydroshikimate + NADPH + H(+). It participates in metabolic intermediate biosynthesis; chorismate biosynthesis; chorismate from D-erythrose 4-phosphate and phosphoenolpyruvate: step 4/7. Its function is as follows. Involved in the biosynthesis of the chorismate, which leads to the biosynthesis of aromatic amino acids. Catalyzes the reversible NADPH linked reduction of 3-dehydroshikimate (DHSA) to yield shikimate (SA). This is Shikimate dehydrogenase (NADP(+)) from Symbiobacterium thermophilum (strain DSM 24528 / JCM 14929 / IAM 14863 / T).